A 272-amino-acid polypeptide reads, in one-letter code: MIKVVPKVLVMSGYGINCETETAHAFQKAGAETDIVHINDLIAGKKKMADYEIIMFPGGFSYGDDTGSGNAFANKIKNNLFDDLTEFINSGKLILGICNGFQVMTNLGLFALPSTDYGERISALESNTNNRYECRWVHIKENDSVCVFTKGINVTHVPIAHGEGRFYCDEKTYHELKENKQIVFSYCDSEGNPANGEYPLNPNGAYQDIAGICDKTGRIFGLMPHPERSLYSISEPEYQLKKEIAKRNGDIIPEFIENNLQIFKNAVEYFNK.

Positions 8-272 constitute a Glutamine amidotransferase type-1 domain; the sequence is VLVMSGYGIN…FKNAVEYFNK (265 aa). The Nucleophile role is filled by C98. Active-site residues include H225, E227, and E235.

As to quaternary structure, part of the FGAM synthase complex composed of 1 PurL, 1 PurQ and 2 PurS subunits.

The protein localises to the cytoplasm. It catalyses the reaction N(2)-formyl-N(1)-(5-phospho-beta-D-ribosyl)glycinamide + L-glutamine + ATP + H2O = 2-formamido-N(1)-(5-O-phospho-beta-D-ribosyl)acetamidine + L-glutamate + ADP + phosphate + H(+). The catalysed reaction is L-glutamine + H2O = L-glutamate + NH4(+). It participates in purine metabolism; IMP biosynthesis via de novo pathway; 5-amino-1-(5-phospho-D-ribosyl)imidazole from N(2)-formyl-N(1)-(5-phospho-D-ribosyl)glycinamide: step 1/2. Its function is as follows. Part of the phosphoribosylformylglycinamidine synthase complex involved in the purines biosynthetic pathway. Catalyzes the ATP-dependent conversion of formylglycinamide ribonucleotide (FGAR) and glutamine to yield formylglycinamidine ribonucleotide (FGAM) and glutamate. The FGAM synthase complex is composed of three subunits. PurQ produces an ammonia molecule by converting glutamine to glutamate. PurL transfers the ammonia molecule to FGAR to form FGAM in an ATP-dependent manner. PurS interacts with PurQ and PurL and is thought to assist in the transfer of the ammonia molecule from PurQ to PurL. The polypeptide is Phosphoribosylformylglycinamidine synthase subunit PurQ (Methanococcus maripaludis (strain DSM 14266 / JCM 13030 / NBRC 101832 / S2 / LL)).